We begin with the raw amino-acid sequence, 265 residues long: Lipopolysaccharide core heptose(I) kinase WaaP (265 aa).

Asp-162 is a catalytic residue.

Belongs to the protein kinase superfamily. KdkA/RfaP family. It depends on Mg(2+) as a cofactor.

It is found in the cell inner membrane. The enzyme catalyses an L-alpha-D-Hep-(1-&gt;3)-L-alpha-D-Hep-(1-&gt;5)-[alpha-Kdo-(2-&gt;4)]-alpha-Kdo-(2-&gt;6)-lipid A + ATP = an L-alpha-D-Hep-(1-&gt;3)-4-O-phospho-L-alpha-D-Hep-(1-&gt;5)-[alpha-Kdo-(2-&gt;4)]-alpha-Kdo-(2-&gt;6)-lipid A + ADP + H(+). It carries out the reaction L-alpha-D-Hep-(1-&gt;3)-L-alpha-D-Hep-(1-&gt;5)-[alpha-Kdo-(2-&gt;4)]-alpha-Kdo-(2-&gt;6)-lipid A (E. coli) + ATP = L-alpha-D-Hep-(1-&gt;3)-4-O-phospho-L-alpha-D-Hep-(1-&gt;5)-[alpha-Kdo-(2-&gt;4)]-alpha-Kdo-(2-&gt;6)-lipid A (E. coli) + ADP + H(+). Its pathway is bacterial outer membrane biogenesis; LPS core biosynthesis. Its function is as follows. Kinase involved in the biosynthesis of the core oligosaccharide region of lipopolysaccharide (LPS). Catalyzes the phosphorylation of heptose I (HepI), the first heptose added to the Kdo2-lipid A module. This is Lipopolysaccharide core heptose(I) kinase WaaP from Escherichia coli.